Reading from the N-terminus, the 201-residue chain is Small ribosomal subunit protein uS4c (201 aa).

The interval 16–43 (GALPGLTSKKPRSASDLRNQSRSGKRSQ) is disordered. The region spanning 89–169 (MRLDNILFRL…LPKHLTLHSF (81 aa)) is the S4 RNA-binding domain.

The protein belongs to the universal ribosomal protein uS4 family. In terms of assembly, part of the 30S ribosomal subunit. Contacts protein S5. The interaction surface between S4 and S5 is involved in control of translational fidelity.

The protein localises to the plastid. Its subcellular location is the chloroplast. Functionally, one of the primary rRNA binding proteins, it binds directly to 16S rRNA where it nucleates assembly of the body of the 30S subunit. In terms of biological role, with S5 and S12 plays an important role in translational accuracy. The chain is Small ribosomal subunit protein uS4c (rps4) from Nymphaea alba (White water-lily).